Here is a 263-residue protein sequence, read N- to C-terminus: Exosome complex component Rrp4 (263 aa).

In terms of domain architecture, S1 motif spans 51-127 (GKYIPSRKDF…KAMKVELSMR (77 aa)). Residues 135–196 (SKGRIIEVVP…DRLTTAIEMI (62 aa)) form the KH domain. Residues 213 to 263 (LRGEPEGTEGSDEEQLVDEEVAGVSLEDDDVTEETSRKVDVLLDNDTDETN) form a disordered region. The span at 218–245 (EGTEGSDEEQLVDEEVAGVSLEDDDVTE) shows a compositional bias: acidic residues.

The protein belongs to the RRP4 family. Component of the archaeal exosome complex. Forms a trimer of Rrp4 and/or Csl4 subunits. The trimer associates with a hexameric ring-like arrangement composed of 3 Rrp41-Rrp42 heterodimers.

Its subcellular location is the cytoplasm. Non-catalytic component of the exosome, which is a complex involved in RNA degradation. Increases the RNA binding and the efficiency of RNA degradation. Confers strong poly(A) specificity to the exosome. This chain is Exosome complex component Rrp4, found in Methanococcoides burtonii (strain DSM 6242 / NBRC 107633 / OCM 468 / ACE-M).